We begin with the raw amino-acid sequence, 240 residues long: MQCFSFIKTIMILFNLLIFLCGAALLAVGIWVSIDGASFLKIFGPLSSSAMQFVNVGYFLIAAGAVVFALGFLGCYGAQTESKCALMTFFFILLLIFIAEVAAAVVALVYTTMAEHFLTLLVVPAIKKDYGSQKDFTQVWNTTMTELKCCGFTNYTDFEDSPYVRENNAFPPFCCNNVTNTVNETCTKEKADNQKVEGCFQQLLYDIRTNAVTVGGVAAGIGGLELAAMIVSMYLYCNLQ.

At 1 to 9 (MQCFSFIKT) the chain is on the cytoplasmic side. The chain crosses the membrane as a helical span at residues 10–30 (IMILFNLLIFLCGAALLAVGI). Residues 31–52 (WVSIDGASFLKIFGPLSSSAMQ) lie on the Extracellular side of the membrane. A helical transmembrane segment spans residues 53 to 73 (FVNVGYFLIAAGAVVFALGFL). Over 74 to 88 (GCYGAQTESKCALMT) the chain is Cytoplasmic. The chain crosses the membrane as a helical span at residues 89 to 109 (FFFILLLIFIAEVAAAVVALV). Residues 110–210 (YTTMAEHFLT…QQLLYDIRTN (101 aa)) are Extracellular-facing. N-linked (GlcNAc...) asparagine glycosylation is present at Asn154. Residues 211-231 (AVTVGGVAAGIGGLELAAMIV) traverse the membrane as a helical segment. Residues 232–240 (SMYLYCNLQ) are Cytoplasmic-facing.

The protein belongs to the tetraspanin (TM4SF) family. In terms of assembly, interacts with SLC19A2. Interacts with NTRK1/TRKA.

The protein localises to the lysosome membrane. Its function is as follows. Structural component of specialized membrane microdomains known as tetraspanin-enriched microdomains (TERMs), which act as platforms for receptor clustering and signaling. Participates thereby in diverse biological functions such as cell signal transduction, adhesion, migration and protein trafficking. Regulates neuronal differentiation in response to NGF by facilitating NGF-mediated activation of NTRK1/TRKA receptor tyrosine kinase and subsequent downstream signaling pathways. Plays a role in the inhibition of TNFalpha-induced apoptosis. Mechanistically, inhibits the NF-kappa-B signaling pathway by blocking phosphorylation of CHUK. Also promotes the stability of the thiamine transporter 1/SLC19A2 in intestinal epithelial cells leading to an increase of thiamine uptake process. The polypeptide is Tetraspanin-1 (TSPAN1) (Macaca fascicularis (Crab-eating macaque)).